The following is a 495-amino-acid chain: Sialin (495 aa).

Residues 1 to 24 (MKSPVSDLAPSDGEEGSDRTPLLQ) are disordered. Ser-3 is subject to Phosphoserine. The short motif at 22-23 (LL) is the Dileucine internalization motif element. A helical transmembrane segment spans residues 42–62 (LAFLSFFGFFVLYSLRVNLSV). N-linked (GlcNAc...) asparagine glycans are attached at residues Asn-71, Asn-77, and Asn-95. A run of 11 helical transmembrane segments spans residues 110 to 130 (WILG…GYVA), 137 to 157 (LLLG…PLAA), 159 to 179 (FGVG…GVTY), 201 to 221 (ISYA…GVIC), 228 to 248 (YVFY…ICLV), 289 to 309 (LPLW…YTLL), 329 to 349 (FLSA…GQAA), 366 to 386 (VFSL…GFIG), 392 to 412 (AVAF…GFSI), 424 to 444 (ILLG…PIIA), and 458 to 478 (TVFC…TLFA).

Belongs to the major facilitator superfamily. Sodium/anion cotransporter family. Significantly expressed in lung endothelial cells, and much less in liver.

The protein localises to the basolateral cell membrane. Its subcellular location is the cytoplasmic vesicle. The protein resides in the secretory vesicle. It is found in the synaptic vesicle membrane. It localises to the lysosome membrane. It carries out the reaction N-acetylneuraminate(in) + H(+)(in) = N-acetylneuraminate(out) + H(+)(out). The enzyme catalyses D-glucuronate(out) + H(+)(out) = D-glucuronate(in) + H(+)(in). The catalysed reaction is 2 nitrate(out) + H(+)(out) = 2 nitrate(in) + H(+)(in). It catalyses the reaction L-aspartate(out) = L-aspartate(in). It carries out the reaction L-glutamate(out) = L-glutamate(in). The enzyme catalyses N-acetyl-L-aspartyl-L-glutamate(out) = N-acetyl-L-aspartyl-L-glutamate(in). Functionally, multifunctional anion transporter that operates via two distinct transport mechanisms, namely proton-coupled anion cotransport and membrane potential-dependent anion transport. Electroneutral proton-coupled acidic monosaccharide symporter, with a sugar to proton stoichiometry of 1:1. Exports glucuronic acid and free sialic acid derived from sialoglycoconjugate degradation out of lysosomes, driven by outwardly directed lysosomal pH gradient. May regulate lysosome function and metabolism of sialylated conjugates that impact oligodendrocyte lineage differentiation and myelinogenesis in the central nervous system. Electrogenic proton-coupled nitrate symporter that transports nitrate ions across the basolateral membrane of salivary gland acinar cells, with nitrate to proton stoichiometry of 2:1. May contribute to nitrate clearance from serum by salivary glands, where it is further concentrated and secreted in the saliva. Uses membrane potential to drive the uptake of acidic amino acids and peptides into synaptic vesicles. Responsible for synaptic vesicular storage of L-aspartate and L-glutamate in pinealocytes as well as vesicular uptake of N-acetyl-L-aspartyl-L-glutamate neuropeptide, relevant to aspartegic-associated glutamatergic neurotransmission and activation of metabotropic receptors that inhibit subsequent transmitter release. Receptor for CM101, a polysaccharide produced by group B Streptococcus with antipathoangiogenic properties. This Ovis aries (Sheep) protein is Sialin (SLC17A5).